A 147-amino-acid polypeptide reads, in one-letter code: Large ribosomal subunit protein uL15 (147 aa).

The interval 20 to 54 is disordered; it reads GRGIGSGKGKTSGKGHKGQKARGTGKVHPWFEGGQ. The span at 30–44 shows a compositional bias: basic residues; that stretch reads TSGKGHKGQKARGTG.

It belongs to the universal ribosomal protein uL15 family. Part of the 50S ribosomal subunit.

In terms of biological role, binds to the 23S rRNA. The sequence is that of Large ribosomal subunit protein uL15 from Thermosipho africanus (strain TCF52B).